The primary structure comprises 631 residues: DNA mismatch repair protein MutL (631 aa).

The interval 389–423 (GEREASRQAGGQRVQETQMSSYGSGQSGGRGRSYA) is disordered.

Belongs to the DNA mismatch repair MutL/HexB family.

In terms of biological role, this protein is involved in the repair of mismatches in DNA. It is required for dam-dependent methyl-directed DNA mismatch repair. May act as a 'molecular matchmaker', a protein that promotes the formation of a stable complex between two or more DNA-binding proteins in an ATP-dependent manner without itself being part of a final effector complex. The chain is DNA mismatch repair protein MutL from Shewanella loihica (strain ATCC BAA-1088 / PV-4).